Reading from the N-terminus, the 121-residue chain is Large ribosomal subunit protein bL12 (121 aa).

Belongs to the bacterial ribosomal protein bL12 family. In terms of assembly, homodimer. Part of the ribosomal stalk of the 50S ribosomal subunit. Forms a multimeric L10(L12)X complex, where L10 forms an elongated spine to which 2 to 4 L12 dimers bind in a sequential fashion. Binds GTP-bound translation factors.

Functionally, forms part of the ribosomal stalk which helps the ribosome interact with GTP-bound translation factors. Is thus essential for accurate translation. In Shewanella frigidimarina (strain NCIMB 400), this protein is Large ribosomal subunit protein bL12.